The primary structure comprises 248 residues: Proteasome subunit alpha type-3 (248 aa).

This sequence belongs to the peptidase T1A family. The 26S proteasome consists of a 20S proteasome core and two 19S regulatory subunits. The 20S proteasome core is composed of 28 subunits that are arranged in four stacked rings, resulting in a barrel-shaped structure. The two end rings are each formed by seven alpha subunits, and the two central rings are each formed by seven beta subunits. The catalytic chamber with the active sites is on the inside of the barrel.

The protein localises to the cytoplasm. The protein resides in the nucleus. Functionally, the proteasome is a multicatalytic proteinase complex which is characterized by its ability to cleave peptides with Arg, Phe, Tyr, Leu, and Glu adjacent to the leaving group at neutral or slightly basic pH. The proteasome has an ATP-dependent proteolytic activity. The chain is Proteasome subunit alpha type-3 (psmA3) from Dictyostelium discoideum (Social amoeba).